Reading from the N-terminus, the 467-residue chain is F-box only protein 6 (467 aa).

The F-box domain occupies Gln-114–Leu-163. Kelch repeat units follow at residues Leu-163–Ala-211, Gly-252–Ser-305, and Cys-406–Gly-456.

The polypeptide is F-box only protein 6 (FBX6) (Arabidopsis thaliana (Mouse-ear cress)).